A 1346-amino-acid chain; its full sequence is Zinc finger protein 541 (1346 aa).

2 disordered regions span residues 1-34 (MDQY…DTLN) and 113-136 (EADE…SSPQ). The span at 21–32 (FSESQGLNCSDT) shows a compositional bias: polar residues. 3 C2H2-type zinc fingers span residues 140–162 (LDCS…YLTH), 168–190 (HVCK…MLTH), and 196–220 (FVCI…YEVH). Disordered regions lie at residues 235-271 (ACGD…LLPH), 283-328 (VHQK…AAPA), 437-472 (SAVP…EDAL), and 578-744 (SQLP…GGYR). 2 stretches are compositionally biased toward low complexity: residues 294–323 (PAGA…PAGP) and 440–458 (PSRE…SPSE). Positions 671 to 685 (PDISSLAKQLRSSKG) are enriched in polar residues. Residues 838-860 (FVCKNCSQMFYTEKGLSSHMCFH) form a C2H2-type 4 zinc finger. Residues 931 to 971 (AMGQEKDGEERDSKESSQQRKRKKRPPPSTAGEPGPAGCHQ) are disordered. A compositionally biased stretch (basic and acidic residues) spans 934–948 (QEKDGEERDSKESSQ). One can recognise an ELM2 domain in the interval 1053 to 1145 (PHINIGSRFQ…VALETLLLRG (93 aa)). An SANT domain is found at 1160–1211 (TGSDVWTPIEKRLFKKAFYAHKKDFYLIHKMIQTKTVAQCVEYYYIWKKMIK). The segment at 1224–1281 (VKREPEEVERTEEKVPCSPRERPSHHPTPKLKTKSYRRESILSSSPNAGSKRTPELLG) is disordered. A compositionally biased stretch (basic and acidic residues) spans 1234–1247 (TEEKVPCSPRERPS). The segment covering 1248–1258 (HHPTPKLKTKS) has biased composition (basic residues). The span at 1264 to 1273 (ILSSSPNAGS) shows a compositional bias: polar residues. The segment at 1289 to 1311 (FPCRECERVFDKIKSRNAHMKRH) adopts a C2H2-type 5 zinc-finger fold.

Interacts with DNTTIP1. Identified in a complex with KCDT19, HDAC1 and HSPA2. Component of a histone deacetylase complex containing DNTTIP1, ZNF541, HDAC1 and HDAC2. Identified in a complex with HDAC1, HDAC2, DNTTIP1 and KCTD19.

Its subcellular location is the nucleus. Transcription regulator which is essential for male fertility and for the completion of meiotic prophase in spermatocytes. Regulates progression of the pachytene stage of meiotic prophase by activating the expression of genes involved in meiosis during spermatogenesis. Maintains the repression of pre-pachytene transcriptional programs, including meiotic double-strand breaks (DSB) formation genes in pachytene spermatocytes and suppresses aberrant DSB formation after mid-pachytene, thus ensuring meiosis progression. The polypeptide is Zinc finger protein 541 (ZNF541) (Homo sapiens (Human)).